Consider the following 155-residue polypeptide: Ribosomal RNA large subunit methyltransferase H (155 aa).

S-adenosyl-L-methionine-binding positions include Leu72, Gly103, and 122–127; that span reads LSKLTM.

The protein belongs to the RNA methyltransferase RlmH family. In terms of assembly, homodimer.

It is found in the cytoplasm. The catalysed reaction is pseudouridine(1915) in 23S rRNA + S-adenosyl-L-methionine = N(3)-methylpseudouridine(1915) in 23S rRNA + S-adenosyl-L-homocysteine + H(+). Functionally, specifically methylates the pseudouridine at position 1915 (m3Psi1915) in 23S rRNA. This is Ribosomal RNA large subunit methyltransferase H from Methylobacillus flagellatus (strain ATCC 51484 / DSM 6875 / VKM B-1610 / KT).